Consider the following 880-residue polypeptide: Alanine--tRNA ligase (880 aa).

The Zn(2+) site is built by H568, H572, C670, and H674.

Belongs to the class-II aminoacyl-tRNA synthetase family. The cofactor is Zn(2+).

The protein localises to the cytoplasm. It catalyses the reaction tRNA(Ala) + L-alanine + ATP = L-alanyl-tRNA(Ala) + AMP + diphosphate. Its function is as follows. Catalyzes the attachment of alanine to tRNA(Ala) in a two-step reaction: alanine is first activated by ATP to form Ala-AMP and then transferred to the acceptor end of tRNA(Ala). Also edits incorrectly charged Ser-tRNA(Ala) and Gly-tRNA(Ala) via its editing domain. The polypeptide is Alanine--tRNA ligase (Ligilactobacillus salivarius (strain UCC118) (Lactobacillus salivarius)).